The following is a 245-amino-acid chain: Exosome complex component RRP41 (245 aa).

Ala-2 is subject to N-acetylalanine.

Belongs to the RNase PH family. Component of the RNA exosome core complex (Exo-9), composed of EXOSC1, EXOSC2, EXOSC3, EXOSC4, EXOSC5, EXOSC6, EXOSC7, EXOSC8 and EXOSC9; within the complex interacts with EXOSC2, EXOSC7 and EXOSC9. The catalytically inactive RNA exosome core complex (Exo-9) associates with the catalytic subunit EXOSC10/RRP6. Exo-9 may associate with DIS3 to form the nucleolar exosome complex, or DIS3L to form the cytoplasmic exosome complex. Exo-9 is formed by a hexameric base ring consisting of the heterodimers EXOSC4-EXOSC9, EXOSC5-EXOSC8 and EXOSC6-EXOSC7, and a cap ring consisting of EXOSC1, EXOSC2 and EXOSC3. The RNA exosome complex associates with cofactors C1D/RRP47, MPHOSPH6/MPP6 and MTREX/MTR4. Interacts with DDX60. Interacts with DIS3; the interaction is direct.

The protein resides in the cytoplasm. It is found in the nucleus. The protein localises to the nucleolus. Its subcellular location is the nucleoplasm. Non-catalytic component of the RNA exosome complex which has 3'-&gt;5' exoribonuclease activity and participates in a multitude of cellular RNA processing and degradation events. In the nucleus, the RNA exosome complex is involved in proper maturation of stable RNA species such as rRNA, snRNA and snoRNA, in the elimination of RNA processing by-products and non-coding 'pervasive' transcripts, such as antisense RNA species and promoter-upstream transcripts (PROMPTs), and of mRNAs with processing defects, thereby limiting or excluding their export to the cytoplasm. The RNA exosome may be involved in Ig class switch recombination (CSR) and/or Ig variable region somatic hypermutation (SHM) by targeting AICDA deamination activity to transcribed dsDNA substrates. In the cytoplasm, the RNA exosome complex is involved in general mRNA turnover and specifically degrades inherently unstable mRNAs containing AU-rich elements (AREs) within their 3' untranslated regions, and in RNA surveillance pathways, preventing translation of aberrant mRNAs. It seems to be involved in degradation of histone mRNA. The catalytic inactive RNA exosome core complex of 9 subunits (Exo-9) is proposed to play a pivotal role in the binding and presentation of RNA for ribonucleolysis, and to serve as a scaffold for the association with catalytic subunits and accessory proteins or complexes. EXOSC4 binds to ARE-containing RNAs. This is Exosome complex component RRP41 (EXOSC4) from Homo sapiens (Human).